Here is a 167-residue protein sequence, read N- to C-terminus: 18.8 kDa class II heat shock protein (167 aa).

Residues Asp49–Ala167 enclose the sHSP domain.

This sequence belongs to the small heat shock protein (HSP20) family.

It localises to the cytoplasm. This Ipomoea nil (Japanese morning glory) protein is 18.8 kDa class II heat shock protein (SHSP-2).